A 209-amino-acid polypeptide reads, in one-letter code: Protease (209 aa).

Active-site residues include H60, D77, and C127.

This sequence belongs to the peptidase C5 family. Interacts with protease cofactor pVI-C; this interaction is necessary for protease activation.

It is found in the virion. It localises to the host nucleus. The enzyme catalyses Cleaves proteins of the adenovirus and its host cell at two consensus sites: -Yaa-Xaa-Gly-Gly-|-Xaa- and -Yaa-Xaa-Gly-Xaa-|-Gly- (in which Yaa is Met, Ile or Leu, and Xaa is any amino acid).. Its activity is regulated as follows. Requires DNA and protease cofactor for maximal activation. Inside nascent virions, becomes partially activated by binding to the viral DNA, allowing it to cleave the cofactor that binds to the protease and fully activates it. Actin, like the viral protease cofactor, seems to act as a cofactor in the cleavage of cytokeratin 18 and of actin itself. Its function is as follows. Cleaves viral precursor proteins (pTP, pIIIa, pVI, pVII, pVIII, and pX) inside newly assembled particles giving rise to mature virions. Protease complexed to its cofactor slides along the viral DNA to specifically locate and cleave the viral precursors. Mature virions have a weakened organization compared to the unmature virions, thereby facilitating subsequent uncoating. Without maturation, the particle lacks infectivity and is unable to uncoat. Late in adenovirus infection, in the cytoplasm, may participate in the cytoskeleton destruction. Cleaves host cell cytoskeletal keratins K7 and K18. This is Protease from Homo sapiens (Human).